The primary structure comprises 105 residues: Defensin-like protein 106 (105 aa).

A signal peptide spans 1–24; sequence MANTPKTLIAFVFSVIVIISYVHC. Disulfide bonds link C57–C94, C63–C87, C73–C92, and C77–C93.

The protein belongs to the DEFL family.

The protein resides in the secreted. The polypeptide is Defensin-like protein 106 (Arabidopsis thaliana (Mouse-ear cress)).